Here is a 366-residue protein sequence, read N- to C-terminus: MRFVDEATINVRAGKGGNGCLSFRREKFIPRGGPDGGNGGDGGSVILRPTNRLLSLYDFRLQRNYEARNGQSGMGSQCDGRKGEDLVLELPLGTLVFEVDDEGHEQMIADLSDPDGVFVVARGGRGGKGNEHFKSSTMRAPRFAQKGEPGEERRLRLELKILADAGLLGLPNAGKSTFISRISAARPKIAAYPFTTLTPNLGVMIDEVDPDRRMVIADIPGLIEGAHTGQGLGHRFLKHVERTRFLVHILSIEDIDPENPWTGFDLINEELARFDEVLREREQIEVVNKIDLRTPEEVDALRQQAAQQGRRIFFISAMHGEGIEEVVDAMWRLRDTIDMHEPLVHLQEVEEEDEEFEDIEVVYTRE.

One can recognise an Obg domain in the interval 1 to 162 (MRFVDEATIN…RRLRLELKIL (162 aa)). Residues 163 to 335 (ADAGLLGLPN…VVDAMWRLRD (173 aa)) enclose the OBG-type G domain. Residues 169–176 (GLPNAGKS), 194–198 (FTTLT), 218–221 (DIPG), 288–291 (NKID), and 316–318 (SAM) contribute to the GTP site. Mg(2+) is bound by residues S176 and T196.

The protein belongs to the TRAFAC class OBG-HflX-like GTPase superfamily. OBG GTPase family. In terms of assembly, monomer. The cofactor is Mg(2+).

The protein resides in the cytoplasm. An essential GTPase which binds GTP, GDP and possibly (p)ppGpp with moderate affinity, with high nucleotide exchange rates and a fairly low GTP hydrolysis rate. Plays a role in control of the cell cycle, stress response, ribosome biogenesis and in those bacteria that undergo differentiation, in morphogenesis control. This is GTPase Obg from Nitratidesulfovibrio vulgaris (strain ATCC 29579 / DSM 644 / CCUG 34227 / NCIMB 8303 / VKM B-1760 / Hildenborough) (Desulfovibrio vulgaris).